Here is a 274-residue protein sequence, read N- to C-terminus: Basic leucine zipper transcriptional factor ATF-like 2 (274 aa).

Disordered regions lie at residues 1–47 (MHLC…ALHQ), 128–151 (GSCYPAQPLSPGPQPHDSPSLLQC), and 187–229 (GSSS…PSSA). A bZIP domain is found at 17 to 80 (EQQRQLKKQK…AWWSRTLHVH (64 aa)). The tract at residues 20 to 41 (RQLKKQKNRAAAQRSRQKHTDK) is basic motif. Basic and acidic residues predominate over residues 37–47 (KHTDKADALHQ). The tract at residues 45-66 (LHQQHESLEKDNLALRKEIQSL) is leucine-zipper. Residues 187-196 (GSSSKLSALQ) are compositionally biased toward low complexity.

Belongs to the bZIP family. Heterodimer; heterodimerizes with JUN family proteins.

The protein resides in the nucleus. Functionally, AP-1 family transcription factor that controls the differentiation of lineage-specific cells in the immune system. Following infection, participates in the differentiation of CD8(+) thymic conventional dendritic cells in the immune system. Acts via the formation of a heterodimer with JUN family proteins that recognizes and binds DNA sequence 5'-TGA[CG]TCA-3' and regulates expression of target genes. Selectively suppresses CCN1 transcription and hence blocks the downstream cell proliferation signals produced by CCN1 and inhibits CCN1-induced anchorage-independent growth and invasion in several cancer types, such as breast cancer, malignant glioma and metastatic melanoma. Possibly acts by interfering with AP-1 binding to CCN1 promoter. This is Basic leucine zipper transcriptional factor ATF-like 2 (BATF2) from Homo sapiens (Human).